Reading from the N-terminus, the 275-residue chain is 3-methyl-2-oxobutanoate hydroxymethyltransferase (275 aa).

Asp51 and Asp90 together coordinate Mg(2+). Residues 51-52 (DS), Asp90, and Lys120 contribute to the 3-methyl-2-oxobutanoate site. Glu122 serves as a coordination point for Mg(2+). The active-site Proton acceptor is the Glu189.

It belongs to the PanB family. In terms of assembly, homodecamer; pentamer of dimers. Requires Mg(2+) as cofactor.

It localises to the cytoplasm. It carries out the reaction 3-methyl-2-oxobutanoate + (6R)-5,10-methylene-5,6,7,8-tetrahydrofolate + H2O = 2-dehydropantoate + (6S)-5,6,7,8-tetrahydrofolate. The protein operates within cofactor biosynthesis; (R)-pantothenate biosynthesis; (R)-pantoate from 3-methyl-2-oxobutanoate: step 1/2. In terms of biological role, catalyzes the reversible reaction in which hydroxymethyl group from 5,10-methylenetetrahydrofolate is transferred onto alpha-ketoisovalerate to form ketopantoate. The polypeptide is 3-methyl-2-oxobutanoate hydroxymethyltransferase (Phenylobacterium zucineum (strain HLK1)).